Reading from the N-terminus, the 391-residue chain is 3-ketoacyl-CoA thiolase (391 aa).

Catalysis depends on C95, which acts as the Acyl-thioester intermediate. Catalysis depends on proton acceptor residues H347 and C377.

Belongs to the thiolase-like superfamily. Thiolase family. As to quaternary structure, heterotetramer of two alpha chains (FadB) and two beta chains (FadA).

The protein localises to the cytoplasm. The enzyme catalyses an acyl-CoA + acetyl-CoA = a 3-oxoacyl-CoA + CoA. Its pathway is lipid metabolism; fatty acid beta-oxidation. In terms of biological role, catalyzes the final step of fatty acid oxidation in which acetyl-CoA is released and the CoA ester of a fatty acid two carbons shorter is formed. In Pseudomonas syringae pv. syringae (strain B728a), this protein is 3-ketoacyl-CoA thiolase.